We begin with the raw amino-acid sequence, 77 residues long: MKLLLFTALVLVVIVSLIEAEAENERACLAEYKVCTDDTGNCCSNLVCDCYRRSKHGVPKGRSCFCLEKDVRYTREI.

A signal peptide spans 1–20 (MKLLLFTALVLVVIVSLIEA). Positions 21–26 (EAENER) are excised as a propeptide.

It belongs to the neurotoxin 19 (CSTX) family. 08 (U8-Lctx) subfamily. Contains 4 disulfide bonds. In terms of tissue distribution, expressed by the venom gland.

The protein localises to the secreted. This Lycosa singoriensis (Wolf spider) protein is U9-lycotoxin-Ls1a.